Consider the following 261-residue polypeptide: 4-hydroxy-tetrahydrodipicolinate reductase (261 aa).

9–14 contributes to the NAD(+) binding site; the sequence is GCLGRM. Arginine 36 serves as a coordination point for NADP(+). Residues 97–99 and 118–121 each bind NAD(+); these read GTT and SANM. Catalysis depends on histidine 151, which acts as the Proton donor/acceptor. Histidine 152 serves as a coordination point for (S)-2,3,4,5-tetrahydrodipicolinate. Lysine 155 (proton donor) is an active-site residue. Residue 161–162 coordinates (S)-2,3,4,5-tetrahydrodipicolinate; that stretch reads GT.

Belongs to the DapB family.

Its subcellular location is the cytoplasm. It carries out the reaction (S)-2,3,4,5-tetrahydrodipicolinate + NAD(+) + H2O = (2S,4S)-4-hydroxy-2,3,4,5-tetrahydrodipicolinate + NADH + H(+). It catalyses the reaction (S)-2,3,4,5-tetrahydrodipicolinate + NADP(+) + H2O = (2S,4S)-4-hydroxy-2,3,4,5-tetrahydrodipicolinate + NADPH + H(+). The protein operates within amino-acid biosynthesis; L-lysine biosynthesis via DAP pathway; (S)-tetrahydrodipicolinate from L-aspartate: step 4/4. Functionally, catalyzes the conversion of 4-hydroxy-tetrahydrodipicolinate (HTPA) to tetrahydrodipicolinate. In Wolbachia sp. subsp. Drosophila simulans (strain wRi), this protein is 4-hydroxy-tetrahydrodipicolinate reductase.